The sequence spans 448 residues: Homogentisate 1,2-dioxygenase (448 aa).

His340, Glu346, and His377 together coordinate Fe cation.

The protein belongs to the homogentisate dioxygenase family. It depends on Fe cation as a cofactor.

It catalyses the reaction homogentisate + O2 = 4-maleylacetoacetate + H(+). The protein operates within amino-acid degradation; L-phenylalanine degradation; acetoacetate and fumarate from L-phenylalanine: step 4/6. The sequence is that of Homogentisate 1,2-dioxygenase (hmgA) from Emericella nidulans (strain FGSC A4 / ATCC 38163 / CBS 112.46 / NRRL 194 / M139) (Aspergillus nidulans).